Here is a 798-residue protein sequence, read N- to C-terminus: Iron-regulated transcriptional activator AFT2 (798 aa).

5 disordered regions span residues arginine 142–lysine 274, tyrosine 331–asparagine 365, asparagine 449–serine 545, glutamine 642–asparagine 718, and glutamine 748–tryptophan 798. Residues glutamate 153–proline 165 are compositionally biased toward polar residues. Residues serine 193–leucine 223 are compositionally biased toward low complexity. Over residues proline 256–lysine 274 the composition is skewed to basic residues. The span at asparagine 449–asparagine 460 shows a compositional bias: polar residues. Residues glutamate 476 to asparagine 517 show a composition bias toward low complexity. 2 stretches are compositionally biased toward polar residues: residues aspartate 518–proline 543 and proline 646–glutamine 656. 2 stretches are compositionally biased toward low complexity: residues leucine 657–proline 695 and asparagine 705–asparagine 718. The span at glutamine 748–alanine 773 shows a compositional bias: polar residues. Positions threonine 774 to asparagine 789 are enriched in low complexity.

The protein resides in the nucleus. Transcription factor involved in iron metabolism, oxidative stress, surface adhesion, hyphal development and virulence. Functions as a negative regulator of MRS4 expression through the CACCC AFT-type sequence in a gene dose-dependent fashion. Acts as a repressor in flocculation, plastic adhesion, and surface hydrophobicity. The protein is Iron-regulated transcriptional activator AFT2 (AFT2) of Candida albicans (strain SC5314 / ATCC MYA-2876) (Yeast).